The sequence spans 209 residues: Uridine kinase (209 aa).

ATP is bound at residue 12–19 (GGSGGGKT).

Belongs to the uridine kinase family.

It localises to the cytoplasm. The catalysed reaction is uridine + ATP = UMP + ADP + H(+). It catalyses the reaction cytidine + ATP = CMP + ADP + H(+). It participates in pyrimidine metabolism; CTP biosynthesis via salvage pathway; CTP from cytidine: step 1/3. Its pathway is pyrimidine metabolism; UMP biosynthesis via salvage pathway; UMP from uridine: step 1/1. This chain is Uridine kinase, found in Streptococcus agalactiae serotype V (strain ATCC BAA-611 / 2603 V/R).